The chain runs to 93 residues: uncharacterized protein (93 aa).

A helical transmembrane segment spans residues 20 to 40 (VYIYLCFSLMTIALICYLIHI). Asparagine 78 carries an N-linked (GlcNAc...) asparagine; by host glycan.

The protein belongs to the asfivirus KP93L family.

The protein resides in the host membrane. This is an uncharacterized protein from Ornithodoros (relapsing fever ticks).